Reading from the N-terminus, the 124-residue chain is MSGRGKGGKVKGKAKSRSNRAGLQFPVGRIHRLLRKGNYAERVGAGAPVYLAAVMEYLAAEVLELAGNAARDNKKTRIIPRHLQLAIRNDEELNKLLSGVTIAQGGVLPNIQAVLLPKKTEKKA.

Residues 1-18 (MSGRGKGGKVKGKAKSRS) show a composition bias toward basic residues. Residues 1 to 21 (MSGRGKGGKVKGKAKSRSNRA) form a disordered region. Ser-2 bears the N-acetylserine mark. Ser-2 is modified (phosphoserine). At Lys-36 the chain carries N6-succinyllysine. Residue Gln-104 is modified to N5-methylglutamine. Lys-119 participates in a covalent cross-link: Glycyl lysine isopeptide (Lys-Gly) (interchain with G-Cter in ubiquitin). The residue at position 120 (Thr-120) is a Phosphothreonine.

Belongs to the histone H2A family. The nucleosome is a histone octamer containing two molecules each of H2A, H2B, H3 and H4 assembled in one H3-H4 heterotetramer and two H2A-H2B heterodimers. The octamer wraps approximately 147 bp of DNA. In terms of processing, the chromatin-associated form, but not the free cytoplasmic form, is phosphorylated on Thr-120 by NHK-1 during mitosis, and dephosphorylated during S-phase. Also phosphorylated on Thr-120 by NHK-1 during prophase I of meiosis; which is required for acetylation of H3 'Lys-14' and H4 'Lys-5', diassembly of the synaptonemal complex, and karyosome formation. Post-translationally, monoubiquitination of Lys-119 by sce/dRING gives a specific tag for epigenetic transcriptional repression. Phosphorylation on Ser-2 is enhanced during mitosis. Phosphorylation on Ser-2 directly represses transcription.

It localises to the nucleus. Its subcellular location is the chromosome. Its function is as follows. Core component of nucleosome. Nucleosomes wrap and compact DNA into chromatin, limiting DNA accessibility to the cellular machineries which require DNA as a template. Histones thereby play a central role in transcription regulation, DNA repair, DNA replication and chromosomal stability. DNA accessibility is regulated via a complex set of post-translational modifications of histones, also called histone code, and nucleosome remodeling. In Drosophila erecta (Fruit fly), this protein is Histone H2A (His2A).